Here is a 361-residue protein sequence, read N- to C-terminus: UPF0283 membrane protein mlr0776 (361 aa).

Positions 1–33 (MTAPRKPAAFRIEPEAAPTQETPKARQAELSRK) are disordered. Residues 23-32 (PKARQAELSR) show a composition bias toward basic and acidic residues. 2 helical membrane passes run 73 to 93 (LFGSIFFGAIGVLVSLAVGLW) and 108 to 128 (LGWLAAGMAAIAVLALVVILI).

It belongs to the UPF0283 family.

It localises to the cell inner membrane. This is UPF0283 membrane protein mlr0776 from Mesorhizobium japonicum (strain LMG 29417 / CECT 9101 / MAFF 303099) (Mesorhizobium loti (strain MAFF 303099)).